Consider the following 288-residue polypeptide: Polyamine aminopropyltransferase (288 aa).

The 230-residue stretch at 9–238 (ETLHDQFGQY…GIMTFAWATD (230 aa)) folds into the PABS domain. Gln-33 contributes to the S-methyl-5'-thioadenosine binding site. Residues His-64 and Asp-88 each contribute to the spermidine site. Residues Glu-108 and 140-141 (DG) each bind S-methyl-5'-thioadenosine. Asp-158 serves as the catalytic Proton acceptor. 158 to 161 (DCTD) is a binding site for spermidine. Pro-165 lines the S-methyl-5'-thioadenosine pocket.

It belongs to the spermidine/spermine synthase family. As to quaternary structure, homodimer or homotetramer.

The protein resides in the cytoplasm. It carries out the reaction S-adenosyl 3-(methylsulfanyl)propylamine + putrescine = S-methyl-5'-thioadenosine + spermidine + H(+). It functions in the pathway amine and polyamine biosynthesis; spermidine biosynthesis; spermidine from putrescine: step 1/1. Functionally, catalyzes the irreversible transfer of a propylamine group from the amino donor S-adenosylmethioninamine (decarboxy-AdoMet) to putrescine (1,4-diaminobutane) to yield spermidine. The chain is Polyamine aminopropyltransferase from Escherichia coli O81 (strain ED1a).